Reading from the N-terminus, the 148-residue chain is MAESDWDTVTVLRKKGPTAAQAKSKQAILAAQRRGEDVETSKKWAAGQNKQHSITKNTAKLDRETEELHHDRVTLEVGKVIQQGRQSKGLTQKDLATKINEKPQVIADYESGRAIPNNQVLGKIERAIGLKLRGKDIGKPIEKGPRAK.

Residue Ala-2 is modified to N-acetylalanine. Position 4 is a phosphoserine (Ser-4). Lys-25 carries the N6-methyllysine modification. Over residues 33–42 the composition is skewed to basic and acidic residues; sequence RRGEDVETSK. The disordered stretch occupies residues 33–66; the sequence is RRGEDVETSKKWAAGQNKQHSITKNTAKLDRETE. The segment at 37–113 is interaction with NR5A2, PPARG and NR1H3; sequence DVETSKKWAA…QVIADYESGR (77 aa). A compositionally biased stretch (polar residues) spans 48–58; the sequence is QNKQHSITKNT. The interval 69 to 108 is interaction with TBP and NR5A1; the sequence is HHDRVTLEVGKVIQQGRQSKGLTQKDLATKINEKPQVIAD. Residues 81–88 carry the IQ motif motif; sequence IQQGRQSK. The HTH cro/C1-type domain occupies 81 to 135; sequence IQQGRQSKGLTQKDLATKINEKPQVIADYESGRAIPNNQVLGKIERAIGLKLRGK. The H-T-H motif DNA-binding region spans 92 to 111; it reads QKDLATKINEKPQVIADYES.

As to quaternary structure, interacts with TBP and the transcription factor IID (TFIID) complex, NR5A2, NR1H3 and PPARG. Interaction with TBP is regulated by phosphorylation. Binds NR5A1, ATF1, FOS and JUN via their conserved basic region. Binding to calmodulin is regulated by calcium and phosphorylation of the IQ motif. In terms of processing, phosphorylated (by PKA and PKC). Expressed in brain, liver, lung, kidney and heart (at protein level). Ubiquitously expressed. More abundant in heart, pancreas, liver, intestine and adipose tissues.

The protein resides in the cytoplasm. The protein localises to the nucleus. Its function is as follows. Transcriptional coactivator stimulating NR5A1 and ligand-dependent NR1H3/LXRA and PPARG transcriptional activities. Enhances the DNA-binding activity of ATF1, ATF2, CREB1 and NR5A1. Regulates nitric oxid synthase activity probably by sequestering calmodulin in the cytoplasm. May function in endothelial cells differentiation, hormone-induced cardiomyocytes hypertrophy and lipid metabolism. This Homo sapiens (Human) protein is Endothelial differentiation-related factor 1 (EDF1).